Consider the following 66-residue polypeptide: UPF0337 protein spyM18_1212 (66 aa).

This sequence belongs to the UPF0337 (CsbD) family.

The protein is UPF0337 protein spyM18_1212 of Streptococcus pyogenes serotype M18 (strain MGAS8232).